Consider the following 624-residue polypeptide: Bifunctional 3'-phosphoadenosine 5'-phosphosulfate synthase 1 (624 aa).

Residue methionine 1 is modified to N-acetylmethionine. The interval 1–225 (MEIPGSLCKK…VVELLQERDI (225 aa)) is adenylyl-sulfate kinase. Lysine 12 bears the N6-acetyllysine mark. 62-67 (GAGKTT) lines the ATP pocket. Adenosine 5'-phosphosulfate-binding positions include 89-92 (DNIR), phenylalanine 101, 106-109 (REEN), 132-133 (IS), lysine 171, and 184-185 (GF). Residues cysteine 207, cysteine 212, 419-422 (QLRN), 521-525 (GRDPA), and alanine 563 contribute to the ATP site. Residues 234–624 (VKELYVPENK…VEYYKSLEKA (391 aa)) form a sulfate adenylyltransferase region.

In the N-terminal section; belongs to the APS kinase family. The protein in the C-terminal section; belongs to the sulfate adenylyltransferase family. As to quaternary structure, homodimer. Expressed in the neonatal brain and in cartilage.

It catalyses the reaction sulfate + ATP + H(+) = adenosine 5'-phosphosulfate + diphosphate. The catalysed reaction is adenosine 5'-phosphosulfate + ATP = 3'-phosphoadenylyl sulfate + ADP + H(+). It functions in the pathway sulfur metabolism; sulfate assimilation. Functionally, bifunctional enzyme with both ATP sulfurylase and APS kinase activity, which mediates two steps in the sulfate activation pathway. The first step is the transfer of a sulfate group to ATP to yield adenosine 5'-phosphosulfate (APS), and the second step is the transfer of a phosphate group from ATP to APS yielding 3'-phosphoadenylylsulfate (PAPS: activated sulfate donor used by sulfotransferase). In mammals, PAPS is the sole source of sulfate; APS appears to be only an intermediate in the sulfate-activation pathway. Required for normal biosynthesis of sulfated L-selectin ligands in endothelial cells. The chain is Bifunctional 3'-phosphoadenosine 5'-phosphosulfate synthase 1 (Papss1) from Mus musculus (Mouse).